The primary structure comprises 207 residues: Thymidine kinase (207 aa).

ATP is bound by residues 15–22 (GSMFSGKS) and 88–91 (DEVQ). Residue Glu-89 is the Proton acceptor of the active site. Positions 145, 148, 183, and 186 each coordinate Zn(2+).

Belongs to the thymidine kinase family. In terms of assembly, homotetramer.

The protein resides in the cytoplasm. It catalyses the reaction thymidine + ATP = dTMP + ADP + H(+). The sequence is that of Thymidine kinase from Oceanobacillus iheyensis (strain DSM 14371 / CIP 107618 / JCM 11309 / KCTC 3954 / HTE831).